The primary structure comprises 181 residues: Probable nicotinate-nucleotide adenylyltransferase (181 aa).

This sequence belongs to the NadD family.

The catalysed reaction is nicotinate beta-D-ribonucleotide + ATP + H(+) = deamido-NAD(+) + diphosphate. It functions in the pathway cofactor biosynthesis; NAD(+) biosynthesis; deamido-NAD(+) from nicotinate D-ribonucleotide: step 1/1. In terms of biological role, catalyzes the reversible adenylation of nicotinate mononucleotide (NaMN) to nicotinic acid adenine dinucleotide (NaAD). This is Probable nicotinate-nucleotide adenylyltransferase from Campylobacter jejuni subsp. jejuni serotype O:6 (strain 81116 / NCTC 11828).